A 274-amino-acid polypeptide reads, in one-letter code: Glucosamine-6-phosphate deaminase (274 aa).

Asp72 functions as the Proton acceptor; for enolization step in the catalytic mechanism. Asp141 (for ring-opening step) is an active-site residue. Catalysis depends on His143, which acts as the Proton acceptor; for ring-opening step. The active-site For ring-opening step is the Glu148.

This sequence belongs to the glucosamine/galactosamine-6-phosphate isomerase family. Homohexamer.

It is found in the cytoplasm. It catalyses the reaction alpha-D-glucosamine 6-phosphate + H2O = beta-D-fructose 6-phosphate + NH4(+). It functions in the pathway nucleotide-sugar biosynthesis; UDP-N-acetyl-alpha-D-glucosamine biosynthesis; alpha-D-glucosamine 6-phosphate from D-fructose 6-phosphate: step 1/1. In terms of biological role, catalyzes the reversible conversion of alpha-D-glucosamine 6-phosphate (GlcN-6P) into beta-D-fructose 6-phosphate (Fru-6P) and ammonium ion, a regulatory reaction step in de novo uridine diphosphate-N-acetyl-alpha-D-glucosamine (UDP-GlcNAc) biosynthesis via hexosamine pathway. This is Glucosamine-6-phosphate deaminase from Drosophila pseudoobscura pseudoobscura (Fruit fly).